Consider the following 91-residue polypeptide: Islet amyloid polypeptide (91 aa).

A signal peptide spans 1–22 (MGILKLPVVLIVLCVALNHLEG). The propeptide occupies 23-33 (GGKPTESHQME). Residues Cys-37 and Cys-42 are joined by a disulfide bond. Tyr-72 carries the tyrosine amide modification. Positions 78 to 91 (VEILKREPLSYLPI) are excised as a propeptide.

It belongs to the calcitonin family. In terms of assembly, can form homodimers. Interacts with IDE and INS. Interaction with INS inhibits homodimerization and fibril formation.

Its subcellular location is the secreted. Amylin/IAPP is a glucoregulatory peptide hormone that plays an important role in the regulation of energy homeostasis. Selectively inhibits insulin-stimulated glucose utilization and glycogen deposition in muscle, while not affecting adipocyte glucose metabolism. IAPP function is mediated by the CALCR-RAMPs (AMYRs) receptor complexes. Amylin can also bind CALCR receptor in the absence of RAMPs, although it is more selective for AMYRs. The chain is Islet amyloid polypeptide (IAPP) from Bos taurus (Bovine).